The primary structure comprises 137 residues: Large-conductance mechanosensitive channel (137 aa).

The next 3 helical transmembrane spans lie at 15–35 (VDLA…NSIV), 38–58 (IIMP…MFIQ), and 80–100 (GNFV…FLVV).

Belongs to the MscL family. As to quaternary structure, homopentamer.

The protein localises to the cell inner membrane. Functionally, channel that opens in response to stretch forces in the membrane lipid bilayer. May participate in the regulation of osmotic pressure changes within the cell. This chain is Large-conductance mechanosensitive channel, found in Brucella anthropi (strain ATCC 49188 / DSM 6882 / CCUG 24695 / JCM 21032 / LMG 3331 / NBRC 15819 / NCTC 12168 / Alc 37) (Ochrobactrum anthropi).